A 349-amino-acid chain; its full sequence is Small ribosomal subunit protein uS2 (349 aa).

Belongs to the universal ribosomal protein uS2 family.

The sequence is that of Small ribosomal subunit protein uS2 from Methylobacterium nodulans (strain LMG 21967 / CNCM I-2342 / ORS 2060).